A 74-amino-acid chain; its full sequence is Small ribosomal subunit protein bS18 (74 aa).

The protein belongs to the bacterial ribosomal protein bS18 family. As to quaternary structure, part of the 30S ribosomal subunit. Forms a tight heterodimer with protein bS6.

Its function is as follows. Binds as a heterodimer with protein bS6 to the central domain of the 16S rRNA, where it helps stabilize the platform of the 30S subunit. This Sphingopyxis alaskensis (strain DSM 13593 / LMG 18877 / RB2256) (Sphingomonas alaskensis) protein is Small ribosomal subunit protein bS18.